The sequence spans 213 residues: Adenylate kinase (213 aa).

10 to 15 (GAGKGT) serves as a coordination point for ATP. Residues 30–59 (STGDMFRAAMANQTEMGVLAKSYIDKGDLV) form an NMP region. Residues T31, R36, 57–59 (DLV), 86–89 (GYPR), and Q93 each bind AMP. Residues 127–160 (GRIINKKTGETFHKIFNPPVGDYKEEDFYQREDD) are LID. ATP is bound by residues R128 and 137-138 (TF). The AMP site is built by R157 and R168. Position 196 (K196) interacts with ATP.

Belongs to the adenylate kinase family. As to quaternary structure, monomer.

It localises to the cytoplasm. It carries out the reaction AMP + ATP = 2 ADP. It participates in purine metabolism; AMP biosynthesis via salvage pathway; AMP from ADP: step 1/1. Functionally, catalyzes the reversible transfer of the terminal phosphate group between ATP and AMP. Plays an important role in cellular energy homeostasis and in adenine nucleotide metabolism. In Streptococcus equi subsp. zooepidemicus (strain H70), this protein is Adenylate kinase.